The primary structure comprises 250 residues: Probable E3 ubiquitin-protein ligase RHY1A (250 aa).

Over residues methionine 1–threonine 10 the composition is skewed to polar residues. The segment at methionine 1 to leucine 106 is disordered. Basic residues predominate over residues tyrosine 29–glutamine 47. The segment covering arginine 48–arginine 58 has biased composition (basic and acidic residues). Residues proline 60–histidine 69 are compositionally biased toward basic residues. Residues proline 71–arginine 80 show a composition bias toward basic and acidic residues. The span at threonine 91 to serine 102 shows a compositional bias: low complexity. The RING-type; atypical zinc finger occupies cysteine 203 to arginine 244.

It catalyses the reaction S-ubiquitinyl-[E2 ubiquitin-conjugating enzyme]-L-cysteine + [acceptor protein]-L-lysine = [E2 ubiquitin-conjugating enzyme]-L-cysteine + N(6)-ubiquitinyl-[acceptor protein]-L-lysine.. It participates in protein modification; protein ubiquitination. Its function is as follows. Probable E3 ubiquitin-protein ligase that may possess E3 ubiquitin ligase activity in vitro. The protein is Probable E3 ubiquitin-protein ligase RHY1A of Arabidopsis thaliana (Mouse-ear cress).